The following is a 228-amino-acid chain: UPF0758 protein CTC_02075 (228 aa).

Residues 106–228 enclose the MPN domain; that stretch reads NITNPKDAAY…YISLKEKDIL (123 aa). Zn(2+) is bound by residues histidine 177, histidine 179, and aspartate 190. Residues 177–190 carry the JAMM motif motif; sequence HNHPSGDTTPSKED.

The protein belongs to the UPF0758 family.

This chain is UPF0758 protein CTC_02075, found in Clostridium tetani (strain Massachusetts / E88).